A 1481-amino-acid polypeptide reads, in one-letter code: Structural protein ORF147 (1481 aa).

Disordered stretches follow at residues 65–88 and 1319–1403; these read AEKR…ENLE and DEKL…PPIP. 3 stretches are compositionally biased toward low complexity: residues 73–84, 1323–1336, and 1393–1403; these read KGSQKKSNSSSS, SSTV…SPKT, and SSRTTITPPIP.

Its subcellular location is the virion. The chain is Structural protein ORF147 from Noctuidae (owlet moths).